The following is a 239-amino-acid chain: Leucyl/phenylalanyl-tRNA--protein transferase (239 aa).

The protein belongs to the L/F-transferase family.

It localises to the cytoplasm. It catalyses the reaction N-terminal L-lysyl-[protein] + L-leucyl-tRNA(Leu) = N-terminal L-leucyl-L-lysyl-[protein] + tRNA(Leu) + H(+). The enzyme catalyses N-terminal L-arginyl-[protein] + L-leucyl-tRNA(Leu) = N-terminal L-leucyl-L-arginyl-[protein] + tRNA(Leu) + H(+). It carries out the reaction L-phenylalanyl-tRNA(Phe) + an N-terminal L-alpha-aminoacyl-[protein] = an N-terminal L-phenylalanyl-L-alpha-aminoacyl-[protein] + tRNA(Phe). Its function is as follows. Functions in the N-end rule pathway of protein degradation where it conjugates Leu, Phe and, less efficiently, Met from aminoacyl-tRNAs to the N-termini of proteins containing an N-terminal arginine or lysine. The polypeptide is Leucyl/phenylalanyl-tRNA--protein transferase (Syntrophus aciditrophicus (strain SB)).